Consider the following 781-residue polypeptide: 5-methyltetrahydropteroyltriglutamate--homocysteine methyltransferase (781 aa).

5-methyltetrahydropteroyltri-L-glutamate is bound by residues 20–23 and K131; that span reads RELK. Residues 453 to 455 and E506 each bind L-homocysteine; that span reads IGS. Residues 453–455 and E506 each bind L-methionine; that span reads IGS. Residues 537 to 538 and W583 each bind 5-methyltetrahydropteroyltri-L-glutamate; that span reads RC. Residue D621 participates in L-homocysteine binding. Residue D621 coordinates L-methionine. A 5-methyltetrahydropteroyltri-L-glutamate-binding site is contributed by E627. H663, C665, and E687 together coordinate Zn(2+). H716 functions as the Proton donor in the catalytic mechanism. A Zn(2+)-binding site is contributed by C748.

It belongs to the vitamin-B12 independent methionine synthase family. Zn(2+) serves as cofactor.

The enzyme catalyses 5-methyltetrahydropteroyltri-L-glutamate + L-homocysteine = tetrahydropteroyltri-L-glutamate + L-methionine. The protein operates within amino-acid biosynthesis; L-methionine biosynthesis via de novo pathway; L-methionine from L-homocysteine (MetE route): step 1/1. Catalyzes the transfer of a methyl group from 5-methyltetrahydrofolate to homocysteine resulting in methionine formation. The polypeptide is 5-methyltetrahydropteroyltriglutamate--homocysteine methyltransferase (Bradyrhizobium diazoefficiens (strain JCM 10833 / BCRC 13528 / IAM 13628 / NBRC 14792 / USDA 110)).